The sequence spans 288 residues: Nucleotide-binding protein AHA_3920 (288 aa).

8–15 contacts ATP; that stretch reads GRSGSGKT. 56-59 serves as a coordination point for GTP; sequence DVRN.

Belongs to the RapZ-like family.

Its function is as follows. Displays ATPase and GTPase activities. The protein is Nucleotide-binding protein AHA_3920 of Aeromonas hydrophila subsp. hydrophila (strain ATCC 7966 / DSM 30187 / BCRC 13018 / CCUG 14551 / JCM 1027 / KCTC 2358 / NCIMB 9240 / NCTC 8049).